The chain runs to 201 residues: Holliday junction branch migration complex subunit RuvA (201 aa).

Residues methionine 1–glutamine 63 form a domain I region. Positions threonine 64–valine 142 are domain II. The flexible linker stretch occupies residues alanine 143–serine 153. Positions serine 153–lysine 201 are domain III.

Belongs to the RuvA family. In terms of assembly, homotetramer. Forms an RuvA(8)-RuvB(12)-Holliday junction (HJ) complex. HJ DNA is sandwiched between 2 RuvA tetramers; dsDNA enters through RuvA and exits via RuvB. An RuvB hexamer assembles on each DNA strand where it exits the tetramer. Each RuvB hexamer is contacted by two RuvA subunits (via domain III) on 2 adjacent RuvB subunits; this complex drives branch migration. In the full resolvosome a probable DNA-RuvA(4)-RuvB(12)-RuvC(2) complex forms which resolves the HJ.

Its subcellular location is the cytoplasm. The RuvA-RuvB-RuvC complex processes Holliday junction (HJ) DNA during genetic recombination and DNA repair, while the RuvA-RuvB complex plays an important role in the rescue of blocked DNA replication forks via replication fork reversal (RFR). RuvA specifically binds to HJ cruciform DNA, conferring on it an open structure. The RuvB hexamer acts as an ATP-dependent pump, pulling dsDNA into and through the RuvAB complex. HJ branch migration allows RuvC to scan DNA until it finds its consensus sequence, where it cleaves and resolves the cruciform DNA. In Listeria monocytogenes serotype 4b (strain CLIP80459), this protein is Holliday junction branch migration complex subunit RuvA.